The sequence spans 255 residues: Imidazole glycerol phosphate synthase subunit HisF (255 aa).

Residues D12 and D131 contribute to the active site.

It belongs to the HisA/HisF family. As to quaternary structure, heterodimer of HisH and HisF.

It localises to the cytoplasm. It catalyses the reaction 5-[(5-phospho-1-deoxy-D-ribulos-1-ylimino)methylamino]-1-(5-phospho-beta-D-ribosyl)imidazole-4-carboxamide + L-glutamine = D-erythro-1-(imidazol-4-yl)glycerol 3-phosphate + 5-amino-1-(5-phospho-beta-D-ribosyl)imidazole-4-carboxamide + L-glutamate + H(+). It participates in amino-acid biosynthesis; L-histidine biosynthesis; L-histidine from 5-phospho-alpha-D-ribose 1-diphosphate: step 5/9. In terms of biological role, IGPS catalyzes the conversion of PRFAR and glutamine to IGP, AICAR and glutamate. The HisF subunit catalyzes the cyclization activity that produces IGP and AICAR from PRFAR using the ammonia provided by the HisH subunit. In Neisseria meningitidis serogroup C (strain 053442), this protein is Imidazole glycerol phosphate synthase subunit HisF.